The chain runs to 161 residues: Anaerobic nitrite reductase Glb1-1 (161 aa).

Residues 8-157 (CFTEEQEALV…LVGAIKSEMK (150 aa)) form the Globin domain. The Homodimerization signature appears at 41-45 (EIAPS). 6 residues coordinate heme b: S51, K65, H69, K99, T103, and H104. A Homodimerization motif is present at residues 111 to 123 (NEHFEVTKFALLD).

It belongs to the plant globin family. In terms of assembly, homodimer. The cofactor is heme b. In terms of tissue distribution, mainly expressed in root nodules, and, to a lower extent, in leaves, roots, stems, flowers and fruits. Accumulates in mature root nodules.

It catalyses the reaction Fe(III)-heme b-[protein] + nitric oxide + H2O = Fe(II)-heme b-[protein] + nitrite + 2 H(+). In terms of biological role, phytoglobin that reduces nitrite to nitric oxide (NO) under anoxic conditions (e.g. during flooding or in waterlogged soil) and upon root nodulation. Required for general plant development and during nodulation, especially for the onset of symbiosis. Monitors nitric oxide (NO) levels during early phase of the nitrogen-fixing symbiosis and buffers oxygen in functioning nodules. May not function as an oxygen storage or transport protein. Has an unusually high affinity for O(2) through a hexacoordinate heme iron because of a very low dissociation constant. The protein is Anaerobic nitrite reductase Glb1-1 of Lotus japonicus (Lotus corniculatus var. japonicus).